A 116-amino-acid polypeptide reads, in one-letter code: Transcription elongation factor SPT4 homolog 2 (116 aa).

Residues 19-39 form a C4-type zinc finger; that stretch reads CLRCRLVKTYDQFRDAGCENC.

This sequence belongs to the SPT4 family.

It localises to the nucleus. Its function is as follows. May regulate transcription elongation by RNA polymerase II. May enhance transcriptional pausing at sites proximal to the promoter, which may in turn facilitate the assembly of an elongation competent RNA polymerase II complex. This Arabidopsis thaliana (Mouse-ear cress) protein is Transcription elongation factor SPT4 homolog 2.